The sequence spans 453 residues: Aldehyde dehydrogenase, dimeric NADP-preferring (453 aa).

At Ser-2 the chain carries N-acetylserine. At Lys-178 the chain carries N6-acetyllysine. NAD(+) is bound at residue 188-193 (GNTAVG). At Lys-194 the chain carries N6-acetyllysine. Active-site residues include Glu-210 and Cys-244.

The protein belongs to the aldehyde dehydrogenase family. Homodimer.

The protein localises to the cytoplasm. The catalysed reaction is an aldehyde + NAD(+) + H2O = a carboxylate + NADH + 2 H(+). It catalyses the reaction octanal + NAD(+) + H2O = octanoate + NADH + 2 H(+). In terms of biological role, ALDHs play a major role in the detoxification of alcohol-derived acetaldehyde. They are involved in the metabolism of corticosteroids, biogenic amines, neurotransmitters, and lipid peroxidation. Oxidizes medium and long chain aldehydes into non-toxic fatty acids. Preferentially oxidizes aromatic aldehyde substrates. Comprises about 50 percent of corneal epithelial soluble proteins. May play a role in preventing corneal damage caused by ultraviolet light. The sequence is that of Aldehyde dehydrogenase, dimeric NADP-preferring (ALDH3A1) from Canis lupus familiaris (Dog).